The chain runs to 189 residues: Recombination protein RecR (189 aa).

The C4-type zinc-finger motif lies at 48-63; sequence CQTCFHLSAEPLCDIC. One can recognise a Toprim domain in the interval 71 to 165; the sequence is QLLCVVADSR…QVSRIAYGLP (95 aa).

Belongs to the RecR family.

In terms of biological role, may play a role in DNA repair. It seems to be involved in an RecBC-independent recombinational process of DNA repair. It may act with RecF and RecO. The sequence is that of Recombination protein RecR from Prochlorococcus marinus (strain MIT 9303).